A 1323-amino-acid polypeptide reads, in one-letter code: DNA-directed RNA polymerase subunit beta' (1323 aa).

Residues Cys-60, Cys-62, Cys-75, and Cys-78 each contribute to the Zn(2+) site. Residues Asp-535, Asp-537, and Asp-539 each contribute to the Mg(2+) site. Cys-894, Cys-977, Cys-984, and Cys-987 together coordinate Zn(2+).

This sequence belongs to the RNA polymerase beta' chain family. In terms of assembly, the RNAP catalytic core consists of 2 alpha, 1 beta, 1 beta' and 1 omega subunit. When a sigma factor is associated with the core the holoenzyme is formed, which can initiate transcription. Requires Mg(2+) as cofactor. Zn(2+) is required as a cofactor.

The catalysed reaction is RNA(n) + a ribonucleoside 5'-triphosphate = RNA(n+1) + diphosphate. Its function is as follows. DNA-dependent RNA polymerase catalyzes the transcription of DNA into RNA using the four ribonucleoside triphosphates as substrates. This is DNA-directed RNA polymerase subunit beta' from Corynebacterium urealyticum (strain ATCC 43042 / DSM 7109).